The sequence spans 1293 residues: Phosphoribosylformylglycinamidine synthase (1293 aa).

ATP contacts are provided by residues 305–316 (GAATGSGGEIRD) and Ala-676. 4 residues coordinate Mg(2+): Asp-677, Glu-716, Asn-720, and Asp-884. Ser-886 contributes to the ATP binding site. Residues 1040–1293 (MAILREQGVN…MFRNARVKLG (254 aa)) form the Glutamine amidotransferase type-1 domain. Cys-1133 functions as the Nucleophile in the catalytic mechanism. Catalysis depends on residues His-1258 and Glu-1260.

This sequence in the N-terminal section; belongs to the FGAMS family. In terms of assembly, monomer.

The protein resides in the cytoplasm. It catalyses the reaction N(2)-formyl-N(1)-(5-phospho-beta-D-ribosyl)glycinamide + L-glutamine + ATP + H2O = 2-formamido-N(1)-(5-O-phospho-beta-D-ribosyl)acetamidine + L-glutamate + ADP + phosphate + H(+). The protein operates within purine metabolism; IMP biosynthesis via de novo pathway; 5-amino-1-(5-phospho-D-ribosyl)imidazole from N(2)-formyl-N(1)-(5-phospho-D-ribosyl)glycinamide: step 1/2. Functionally, phosphoribosylformylglycinamidine synthase involved in the purines biosynthetic pathway. Catalyzes the ATP-dependent conversion of formylglycinamide ribonucleotide (FGAR) and glutamine to yield formylglycinamidine ribonucleotide (FGAM) and glutamate. The sequence is that of Phosphoribosylformylglycinamidine synthase from Shewanella denitrificans (strain OS217 / ATCC BAA-1090 / DSM 15013).